A 105-amino-acid chain; its full sequence is Small ribosomal subunit protein uS10 (105 aa).

Belongs to the universal ribosomal protein uS10 family. Part of the 30S ribosomal subunit.

Its function is as follows. Involved in the binding of tRNA to the ribosomes. This is Small ribosomal subunit protein uS10 from Crocosphaera subtropica (strain ATCC 51142 / BH68) (Cyanothece sp. (strain ATCC 51142)).